A 399-amino-acid chain; its full sequence is Putative gustatory receptor 59e (399 aa).

Topologically, residues 1 to 33 (MDSSYWENLLLTINRFLGVYPSGRVGVLRWLHT) are cytoplasmic. Residues 34–54 (LWSLFLLMYIWTGSIVKCLEF) form a helical membrane-spanning segment. Topologically, residues 55-65 (TVEIPTIEKLL) are extracellular. The helical transmembrane segment at 66–86 (YLMEFPGNMATIAILVYYAVL) threads the bilayer. The Cytoplasmic portion of the chain corresponds to 87–120 (NRPLAHGAELQIERIITGLKGKAKRLVYKRHGQR). Residues 121-141 (TLHLMATTLVFHGLCVLVDVV) traverse the membrane as a helical segment. At 142–206 (NYDFEFWTTW…RPPQGSTKLD (65 aa)) the chain is on the extracellular side. A helical membrane pass occupies residues 207 to 227 (ACYESAFAVLVDAGGGSALMI). Residues 228 to 250 (EEMRYTCNLIEQVHSQFLLRFGL) are Cytoplasmic-facing. Residues 251-271 (YLVLNLLNSLVSICVELYLIF) form a helical membrane-spanning segment. The Extracellular portion of the chain corresponds to 272 to 282 (NFFETPLWEES). Residues 283 to 303 (VLLVYRLLWLAMHGGRIWFIL) form a helical membrane-spanning segment. The Cytoplasmic segment spans residues 304–361 (SVNEQILEQKCNLCQLLNELEVCSSRLQRTINRFLLQLQRSIDQPLEACGIVTLDTRS). Residues 362-382 (LGGFIGVLMAIVIFLIQIGLG) form a helical membrane-spanning segment. N-linked (GlcNAc...) asparagine glycosylation is found at Asn383 and Asn392. The Extracellular portion of the chain corresponds to 383-399 (NKSLMGVALNRSNWVYV).

Belongs to the insect chemoreceptor superfamily. Gustatory receptor (GR) family. Gr10a subfamily. In terms of tissue distribution, expressed in the adult labellar chemosensory neurons. In larvae, is expressed in neurons of the terminal external chemosensory organ.

The protein localises to the cell membrane. Its function is as follows. Probable gustatory receptor which mediates acceptance or avoidance behavior, depending on its substrates. The protein is Putative gustatory receptor 59e (Gr59e) of Drosophila melanogaster (Fruit fly).